The primary structure comprises 197 residues: Small ribosomal subunit protein uS4c (197 aa).

In terms of domain architecture, S4 RNA-binding spans Met82–Asn143.

It belongs to the universal ribosomal protein uS4 family. Part of the 30S ribosomal subunit. Contacts protein S5. The interaction surface between S4 and S5 is involved in control of translational fidelity.

Its subcellular location is the plastid. It is found in the chloroplast. In terms of biological role, one of the primary rRNA binding proteins, it binds directly to 16S rRNA where it nucleates assembly of the body of the 30S subunit. Its function is as follows. With S5 and S12 plays an important role in translational accuracy. In Gladiolus papilio (Goldblotch gladiolus), this protein is Small ribosomal subunit protein uS4c (rps4).